Here is a 317-residue protein sequence, read N- to C-terminus: Heme A synthase (317 aa).

Residues 1 to 6 (MQRSLK) are Cytoplasmic-facing. Residues 7–27 (WFASTTTVAMLFVLIGGALVT) traverse the membrane as a helical segment. Residues 28-54 (KTDSGMGCGRSWPLCHGQWIPDDITPQ) are Extracellular-facing. Cysteines 35 and 42 form a disulfide. A helical membrane pass occupies residues 55–75 (LVIELSHRLVSGLAAIMVLIL). Residue E58 is part of the active site. H61 contacts heme o. Over 76–91 (CIRSWRVMGHVRETKP) the chain is Cytoplasmic. The chain crosses the membrane as a helical span at residues 92-112 (LAVLSFVFLVLQSLIGAAAVV). Residues 113–123 (WGQSDFVMALH) are Extracellular-facing. Heme o is bound at residue H123. Residues 124–144 (FGISLISFAAVLLLTLLIFVV) traverse the membrane as a helical segment. Topologically, residues 145 to 159 (DKKFSPTSLQLDGQM) are cytoplasmic. Residues 160-180 (RFHIYGIIIYSYLVVYTGALV) form a helical membrane-spanning segment. Topologically, residues 181 to 214 (RHTNASLACPSWPLCAKSRLLPVQFHEWVQMGHR) are extracellular. C189 and C195 form a disulfide bridge. H213 lines the heme b pocket. A helical membrane pass occupies residues 215 to 235 (LAAAVIIIWIAVATVHAARYY). At 236–243 (REQPVIYY) the chain is on the cytoplasmic side. A helical transmembrane segment spans residues 244 to 264 (GWIISLLLVLAQMVTGALVVF). The Extracellular segment spans residues 265–272 (TELNLYIS). Residues 273–293 (LAHAFFISCLFGVLSYLLLLA) form a helical membrane-spanning segment. Residue H275 participates in heme b binding. Residues 294–317 (LRTRRRPATAAGRSVEDTASAPLK) are Cytoplasmic-facing.

It belongs to the COX15/CtaA family. Type 1 subfamily. Interacts with CtaB. Heme b serves as cofactor.

The protein resides in the cell membrane. It carries out the reaction Fe(II)-heme o + 2 A + H2O = Fe(II)-heme a + 2 AH2. The protein operates within porphyrin-containing compound metabolism; heme A biosynthesis; heme A from heme O: step 1/1. In terms of biological role, catalyzes the conversion of heme O to heme A by two successive hydroxylations of the methyl group at C8. The first hydroxylation forms heme I, the second hydroxylation results in an unstable dihydroxymethyl group, which spontaneously dehydrates, resulting in the formyl group of heme A. The sequence is that of Heme A synthase from Geobacillus thermodenitrificans.